The sequence spans 348 residues: Large ribosomal subunit protein uL3m (348 aa).

The transit peptide at 1–40 (MPGWRLLAQAGARVLGCGARGLGADPGLERRKNILFFVRN) directs the protein to the mitochondrion.

Belongs to the universal ribosomal protein uL3 family. Component of the mitochondrial ribosome large subunit (39S) which comprises a 16S rRNA and about 50 distinct proteins.

The protein resides in the mitochondrion. In Mus musculus (Mouse), this protein is Large ribosomal subunit protein uL3m (Mrpl3).